The following is a 154-amino-acid chain: Myoglobin (154 aa).

Residues 2-148 enclose the Globin domain; the sequence is GLSDGEWQLV…FRNDIAAKYK (147 aa). S4 is modified (phosphoserine). H65 lines the nitrite pocket. An O2-binding site is contributed by H65. Position 68 is a phosphothreonine (T68). H94 is a binding site for heme b.

Monomer.

It is found in the cytoplasm. The protein resides in the sarcoplasm. It catalyses the reaction Fe(III)-heme b-[protein] + nitric oxide + H2O = Fe(II)-heme b-[protein] + nitrite + 2 H(+). The enzyme catalyses H2O2 + AH2 = A + 2 H2O. Monomeric heme protein which primary function is to store oxygen and facilitate its diffusion within muscle tissues. Reversibly binds oxygen through a pentacoordinated heme iron and enables its timely and efficient release as needed during periods of heightened demand. Depending on the oxidative conditions of tissues and cells, and in addition to its ability to bind oxygen, it also has a nitrite reductase activity whereby it regulates the production of bioactive nitric oxide. Under stress conditions, like hypoxia and anoxia, it also protects cells against reactive oxygen species thanks to its pseudoperoxidase activity. The sequence is that of Myoglobin from Hystrix cristata (North African crested porcupine).